The sequence spans 1325 residues: Clustered mitochondria protein homolog (1325 aa).

The Clu domain occupies 311-573; it reads PKHESDPMRT…RHTPMDVTWL (263 aa). Disordered regions lie at residues 893–937, 1032–1063, and 1245–1325; these read KHAE…PLRT, DSNQ…DDQL, and QHAR…AKRS. Basic residues predominate over residues 1265–1275; it reads SAHHHHHRHLH. The span at 1276–1285 shows a compositional bias: low complexity; sequence QQQQNSSSSP. Basic residues predominate over residues 1314–1325; that stretch reads AARKRAARAKRS.

It belongs to the CLU family. In terms of assembly, may associate with the eukaryotic translation initiation factor 3 (eIF-3) complex.

It localises to the cytoplasm. MRNA-binding protein involved in proper cytoplasmic distribution of mitochondria. The protein is Clustered mitochondria protein homolog of Malassezia globosa (strain ATCC MYA-4612 / CBS 7966) (Dandruff-associated fungus).